The chain runs to 448 residues: UDP-N-acetylmuramate--L-alanine ligase (448 aa).

Residue 118–124 (GTHGKTT) coordinates ATP.

It belongs to the MurCDEF family.

It localises to the cytoplasm. It catalyses the reaction UDP-N-acetyl-alpha-D-muramate + L-alanine + ATP = UDP-N-acetyl-alpha-D-muramoyl-L-alanine + ADP + phosphate + H(+). It functions in the pathway cell wall biogenesis; peptidoglycan biosynthesis. In terms of biological role, cell wall formation. The sequence is that of UDP-N-acetylmuramate--L-alanine ligase from Flavobacterium psychrophilum (strain ATCC 49511 / DSM 21280 / CIP 103535 / JIP02/86).